We begin with the raw amino-acid sequence, 304 residues long: Beta-lactamase AER-1 (304 aa).

Residues 1 to 37 (MYVLSVEKPTLRNKFAAGIGVVLVCVVASFIPTPVFA) form the signal peptide. Ser-83 acts as the Acyl-ester intermediate in catalysis. Cysteines 90 and 137 form a disulfide. The segment at 173 to 195 (ETQLDRKEPELNEGTPGDVRDTT) is disordered. 248–250 (KTG) is a substrate binding site.

This sequence belongs to the class-A beta-lactamase family.

It carries out the reaction a beta-lactam + H2O = a substituted beta-amino acid. Its function is as follows. Hydrolyzes carbenicillin. Methicillin and oxacillin are weakly hydrolyzed. This chain is Beta-lactamase AER-1 (aer1), found in Aeromonas hydrophila.